The sequence spans 244 residues: MSDTPDLAGVWKAKILTLFPEAFPGVLGESLTGKALQQGLWQLETVDLRPFGIGKHKNVDDTPAGGGAGMVLRADVLGDAIEHAMQGTAGNWPLIYLSPRGRRMDQQMMQTFARCDGLTLLCGRFEGVDERVLEHYGIQEVSLGDFVMTGGELAAQALIDATVRLIPGVLGNQASTEEESFSSGLLEHPQYTRPADWKGRAIPDVLMSGHHGKIAEWRQDMSEKITQERRPDLWAAYQARKSKT.

S-adenosyl-L-methionine contacts are provided by residues G123 and L143–M148.

It belongs to the RNA methyltransferase TrmD family. Homodimer.

Its subcellular location is the cytoplasm. The catalysed reaction is guanosine(37) in tRNA + S-adenosyl-L-methionine = N(1)-methylguanosine(37) in tRNA + S-adenosyl-L-homocysteine + H(+). Its function is as follows. Specifically methylates guanosine-37 in various tRNAs. The protein is tRNA (guanine-N(1)-)-methyltransferase of Ruegeria sp. (strain TM1040) (Silicibacter sp.).